Consider the following 372-residue polypeptide: MMHENPIKRRPSRRLYVGNVPIGDGAPIAVQSMTNTETTDVDATVAQIEALAQAGADIVRVSVPTMEAAEAFKQIKQRSPVPLVTDIHFDYRIALKVAEYGADCLRINPGNIGHEDRIKAVVDAARERNIPIRIGVNGGSLEKDLQEKYGEPTAEALVESAMRHVNILYKLDFYDFKVSVKASDVFLAVESYRLLAQKIDQPLHLGITEAGGKRSGAVKSSVGLGMLLAEGIGDTLRVSLAADPVEEIKVGFDILKSLRIRARGINFIACPSCSRQEFDVINTVNALEERLEDITIPMDVSIIGCVVNGPGEALVSHVGLAGAKNKSGLYIGGARQKLRLDNQNLVDELEAQIREQVKFIEANKIDVKEING.

4 residues coordinate [4Fe-4S] cluster: C270, C273, C305, and E312.

Belongs to the IspG family. [4Fe-4S] cluster is required as a cofactor.

It catalyses the reaction (2E)-4-hydroxy-3-methylbut-2-enyl diphosphate + oxidized [flavodoxin] + H2O + 2 H(+) = 2-C-methyl-D-erythritol 2,4-cyclic diphosphate + reduced [flavodoxin]. Its pathway is isoprenoid biosynthesis; isopentenyl diphosphate biosynthesis via DXP pathway; isopentenyl diphosphate from 1-deoxy-D-xylulose 5-phosphate: step 5/6. In terms of biological role, converts 2C-methyl-D-erythritol 2,4-cyclodiphosphate (ME-2,4cPP) into 1-hydroxy-2-methyl-2-(E)-butenyl 4-diphosphate. This is 4-hydroxy-3-methylbut-2-en-1-yl diphosphate synthase (flavodoxin) from Idiomarina loihiensis (strain ATCC BAA-735 / DSM 15497 / L2-TR).